Consider the following 81-residue polypeptide: Cytochrome c oxidase subunit 7B2, mitochondrial (81 aa).

The N-terminal 25 residues, 1–25 (MMFPLARNALSSLKIQSILQSMARH), are a transit peptide targeting the mitochondrion. The Mitochondrial matrix portion of the chain corresponds to 26-33 (SHVKHSPD). The chain crosses the membrane as a helical span at residues 34–60 (FHDKYGNAVLASGTAFCVATWVFTATQ). The Mitochondrial intermembrane segment spans residues 61-81 (IGIEWNLSPVGRVTPKEWKHQ).

This sequence belongs to the cytochrome c oxidase VIIb family. As to quaternary structure, component of the cytochrome c oxidase (complex IV, CIV), a multisubunit enzyme composed of 14 subunits. The complex is composed of a catalytic core of 3 subunits MT-CO1, MT-CO2 and MT-CO3, encoded in the mitochondrial DNA, and 11 supernumerary subunits COX4I, COX5A, COX5B, COX6A, COX6B, COX6C, COX7A, COX7B, COX7C, COX8 and NDUFA4, which are encoded in the nuclear genome. The complex exists as a monomer or a dimer and forms supercomplexes (SCs) in the inner mitochondrial membrane with NADH-ubiquinone oxidoreductase (complex I, CI) and ubiquinol-cytochrome c oxidoreductase (cytochrome b-c1 complex, complex III, CIII), resulting in different assemblies (supercomplex SCI(1)III(2)IV(1) and megacomplex MCI(2)III(2)IV(2)).

It localises to the mitochondrion inner membrane. The protein operates within energy metabolism; oxidative phosphorylation. In terms of biological role, component of the cytochrome c oxidase, the last enzyme in the mitochondrial electron transport chain which drives oxidative phosphorylation. The respiratory chain contains 3 multisubunit complexes succinate dehydrogenase (complex II, CII), ubiquinol-cytochrome c oxidoreductase (cytochrome b-c1 complex, complex III, CIII) and cytochrome c oxidase (complex IV, CIV), that cooperate to transfer electrons derived from NADH and succinate to molecular oxygen, creating an electrochemical gradient over the inner membrane that drives transmembrane transport and the ATP synthase. Cytochrome c oxidase is the component of the respiratory chain that catalyzes the reduction of oxygen to water. Electrons originating from reduced cytochrome c in the intermembrane space (IMS) are transferred via the dinuclear copper A center (CU(A)) of subunit 2 and heme A of subunit 1 to the active site in subunit 1, a binuclear center (BNC) formed by heme A3 and copper B (CU(B)). The BNC reduces molecular oxygen to 2 water molecules using 4 electrons from cytochrome c in the IMS and 4 protons from the mitochondrial matrix. In Homo sapiens (Human), this protein is Cytochrome c oxidase subunit 7B2, mitochondrial (COX7B2).